A 317-amino-acid chain; its full sequence is Acetyl-coenzyme A carboxylase carboxyl transferase subunit alpha (317 aa).

Positions Thr38 to Glu292 constitute a CoA carboxyltransferase C-terminal domain.

It belongs to the AccA family. Acetyl-CoA carboxylase is a heterohexamer composed of biotin carboxyl carrier protein (AccB), biotin carboxylase (AccC) and two subunits each of ACCase subunit alpha (AccA) and ACCase subunit beta (AccD).

It localises to the cytoplasm. The catalysed reaction is N(6)-carboxybiotinyl-L-lysyl-[protein] + acetyl-CoA = N(6)-biotinyl-L-lysyl-[protein] + malonyl-CoA. It functions in the pathway lipid metabolism; malonyl-CoA biosynthesis; malonyl-CoA from acetyl-CoA: step 1/1. In terms of biological role, component of the acetyl coenzyme A carboxylase (ACC) complex. First, biotin carboxylase catalyzes the carboxylation of biotin on its carrier protein (BCCP) and then the CO(2) group is transferred by the carboxyltransferase to acetyl-CoA to form malonyl-CoA. This is Acetyl-coenzyme A carboxylase carboxyl transferase subunit alpha from Oceanobacillus iheyensis (strain DSM 14371 / CIP 107618 / JCM 11309 / KCTC 3954 / HTE831).